The chain runs to 184 residues: NADH-quinone oxidoreductase subunit B (184 aa).

The [4Fe-4S] cluster site is built by Cys-63, Cys-64, Cys-128, and Cys-158.

It belongs to the complex I 20 kDa subunit family. As to quaternary structure, NDH-1 is composed of 14 different subunits. Subunits NuoB, C, D, E, F, and G constitute the peripheral sector of the complex. [4Fe-4S] cluster serves as cofactor.

The protein localises to the cell inner membrane. It catalyses the reaction a quinone + NADH + 5 H(+)(in) = a quinol + NAD(+) + 4 H(+)(out). Functionally, NDH-1 shuttles electrons from NADH, via FMN and iron-sulfur (Fe-S) centers, to quinones in the respiratory chain. The immediate electron acceptor for the enzyme in this species is believed to be ubiquinone. Couples the redox reaction to proton translocation (for every two electrons transferred, four hydrogen ions are translocated across the cytoplasmic membrane), and thus conserves the redox energy in a proton gradient. In Xylella fastidiosa (strain M23), this protein is NADH-quinone oxidoreductase subunit B.